A 140-amino-acid chain; its full sequence is MFRMPIVTMERVDSFSAAHRLHSEKLSDAENKETFGKCNNSNGHGHNYVWKVKLRGEVDPTSGMVYDLAKLKKEMSLVLDTVDHRNLDKDVEFFKTTVSTSENVAIYMFEKLKSVMSNPSVLYKVTIEETPKNIFTYKGC.

His-19 lines the Zn(2+) pocket. The active-site Proton acceptor is the Cys-38. His-44 and His-46 together coordinate Zn(2+). Active-site charge relay system residues include His-84 and Glu-129.

It belongs to the PTPS family. As to quaternary structure, homohexamer formed of two homotrimers in a head to head fashion. It depends on Zn(2+) as a cofactor.

The enzyme catalyses 7,8-dihydroneopterin 3'-triphosphate = 6-pyruvoyl-5,6,7,8-tetrahydropterin + triphosphate + H(+). It functions in the pathway cofactor biosynthesis; tetrahydrobiopterin biosynthesis; tetrahydrobiopterin from 7,8-dihydroneopterin triphosphate: step 1/3. Functionally, involved in the biosynthesis of tetrahydrobiopterin, an essential cofactor of aromatic amino acid hydroxylases. Catalyzes the transformation of 7,8-dihydroneopterin triphosphate into 6-pyruvoyl tetrahydropterin. This chain is Putative 6-pyruvoyl tetrahydrobiopterin synthase (ptps-1), found in Caenorhabditis elegans.